We begin with the raw amino-acid sequence, 337 residues long: Lipoyl synthase (337 aa).

7 residues coordinate [4Fe-4S] cluster: C81, C86, C92, C107, C111, C114, and S323. One can recognise a Radical SAM core domain in the interval 93–312; the sequence is FSHGTATFMI…EDYGNALGFS (220 aa).

It belongs to the radical SAM superfamily. Lipoyl synthase family. [4Fe-4S] cluster serves as cofactor.

The protein resides in the cytoplasm. It catalyses the reaction [[Fe-S] cluster scaffold protein carrying a second [4Fe-4S](2+) cluster] + N(6)-octanoyl-L-lysyl-[protein] + 2 oxidized [2Fe-2S]-[ferredoxin] + 2 S-adenosyl-L-methionine + 4 H(+) = [[Fe-S] cluster scaffold protein] + N(6)-[(R)-dihydrolipoyl]-L-lysyl-[protein] + 4 Fe(3+) + 2 hydrogen sulfide + 2 5'-deoxyadenosine + 2 L-methionine + 2 reduced [2Fe-2S]-[ferredoxin]. Its pathway is protein modification; protein lipoylation via endogenous pathway; protein N(6)-(lipoyl)lysine from octanoyl-[acyl-carrier-protein]: step 2/2. In terms of biological role, catalyzes the radical-mediated insertion of two sulfur atoms into the C-6 and C-8 positions of the octanoyl moiety bound to the lipoyl domains of lipoate-dependent enzymes, thereby converting the octanoylated domains into lipoylated derivatives. The chain is Lipoyl synthase from Xanthomonas axonopodis pv. citri (strain 306).